We begin with the raw amino-acid sequence, 428 residues long: Enolase (428 aa).

(2R)-2-phosphoglycerate is bound at residue Gln-173. The active-site Proton donor is Glu-217. 3 residues coordinate Mg(2+): Asp-253, Glu-294, and Asp-320. Positions 345, 374, 375, and 396 each coordinate (2R)-2-phosphoglycerate. Lys-345 acts as the Proton acceptor in catalysis.

It belongs to the enolase family. The cofactor is Mg(2+).

The protein localises to the cytoplasm. It localises to the secreted. It is found in the cell surface. It catalyses the reaction (2R)-2-phosphoglycerate = phosphoenolpyruvate + H2O. The protein operates within carbohydrate degradation; glycolysis; pyruvate from D-glyceraldehyde 3-phosphate: step 4/5. In terms of biological role, catalyzes the reversible conversion of 2-phosphoglycerate (2-PG) into phosphoenolpyruvate (PEP). It is essential for the degradation of carbohydrates via glycolysis. The chain is Enolase from Methanosarcina mazei (strain ATCC BAA-159 / DSM 3647 / Goe1 / Go1 / JCM 11833 / OCM 88) (Methanosarcina frisia).